We begin with the raw amino-acid sequence, 320 residues long: Cytochrome f (320 aa).

Residues 1 to 35 (MQTRKTLSWIKEEITRSISVSLMIYIITGAYISNA) form the signal peptide. The heme site is built by Tyr36, Cys56, Cys59, and His60. A helical membrane pass occupies residues 286–306 (VQGLLFFLASVILAQIFLVLK).

Belongs to the cytochrome f family. In terms of assembly, the 4 large subunits of the cytochrome b6-f complex are cytochrome b6, subunit IV (17 kDa polypeptide, petD), cytochrome f and the Rieske protein, while the 4 small subunits are PetG, PetL, PetM and PetN. The complex functions as a dimer. It depends on heme as a cofactor.

It is found in the plastid. Its subcellular location is the chloroplast thylakoid membrane. Component of the cytochrome b6-f complex, which mediates electron transfer between photosystem II (PSII) and photosystem I (PSI), cyclic electron flow around PSI, and state transitions. The sequence is that of Cytochrome f from Populus trichocarpa (Western balsam poplar).